Reading from the N-terminus, the 119-residue chain is uncharacterized protein (119 aa).

This sequence to Synechocystis PCC 6803 slr0903.

This is an uncharacterized protein from Methanocaldococcus jannaschii (strain ATCC 43067 / DSM 2661 / JAL-1 / JCM 10045 / NBRC 100440) (Methanococcus jannaschii).